The primary structure comprises 248 residues: Probable transcriptional regulatory protein FTW_1073 (248 aa).

The protein belongs to the TACO1 family.

It is found in the cytoplasm. This is Probable transcriptional regulatory protein FTW_1073 from Francisella tularensis subsp. tularensis (strain WY96-3418).